The chain runs to 449 residues: tRNA-2-methylthio-N(6)-dimethylallyladenosine synthase (449 aa).

Residues 3-124 form the MTTase N-terminal domain; sequence KMLYIKTYGC…LPTMLEKLDS (122 aa). Positions 12, 48, 87, 163, 167, and 170 each coordinate [4Fe-4S] cluster. The Radical SAM core domain occupies 149–380; it reads KSPTVSGLVS…QAQLMQQQLE (232 aa). One can recognise a TRAM domain in the interval 383–447; sequence QKLIGKVVPV…ASSLFGEVYA (65 aa).

Belongs to the methylthiotransferase family. MiaB subfamily. Monomer. [4Fe-4S] cluster is required as a cofactor.

It localises to the cytoplasm. It catalyses the reaction N(6)-dimethylallyladenosine(37) in tRNA + (sulfur carrier)-SH + AH2 + 2 S-adenosyl-L-methionine = 2-methylsulfanyl-N(6)-dimethylallyladenosine(37) in tRNA + (sulfur carrier)-H + 5'-deoxyadenosine + L-methionine + A + S-adenosyl-L-homocysteine + 2 H(+). Its function is as follows. Catalyzes the methylthiolation of N6-(dimethylallyl)adenosine (i(6)A), leading to the formation of 2-methylthio-N6-(dimethylallyl)adenosine (ms(2)i(6)A) at position 37 in tRNAs that read codons beginning with uridine. This is tRNA-2-methylthio-N(6)-dimethylallyladenosine synthase from Orientia tsutsugamushi (strain Ikeda) (Rickettsia tsutsugamushi).